Reading from the N-terminus, the 473-residue chain is Myocyte-specific enhancer factor 2C (473 aa).

In terms of domain architecture, MADS-box spans 1–61 (MGRKKIQITR…NKLFQYASTD (61 aa)). Lys4 carries the N6-acetyllysine modification. A DNA-binding region (mef2-type) is located at residues 58 to 86 (ASTDMDKVLLKYTEYNEPHESRTNSDIVE). Ser59 is subject to Phosphoserine; by CK2. Residues 91 to 116 (KGLNGCDSPDPDADDSVGHSPESEDK) form a disordered region. Ser98, Ser106, and Ser110 each carry phosphoserine. Residues Lys116 and Lys119 each carry the N6-acetyllysine modification. The segment at 180–206 (NSMSPGVTHRPPSAGNTGGLMGGDLTS) is disordered. Ser222 and Ser228 each carry phosphoserine. Lys234 and Lys239 each carry N6-acetyllysine. Residue Ser240 is modified to Phosphoserine. N6-acetyllysine is present on residues Lys252 and Lys264. The segment at 271 to 278 (SEDVDLLL) is beta domain. Phosphothreonine; by MAPK14 occurs at positions 293 and 300. The interval 368-399 (ACTSTHLSQSSNLSLPSTQSLNIKSEPVSPPR) is transcription repressor. The segment covering 375–390 (SQSSNLSLPSTQSLNI) has biased composition (polar residues). A disordered region spans residues 375-473 (SQSSNLSLPS…RMRLSEGWAT (99 aa)). Lys391 participates in a covalent cross-link: Glycyl lysine isopeptide (Lys-Gly) (interchain with G-Cter in SUMO). The residue at position 396 (Ser396) is a Phosphoserine; by CDK5. The residue at position 419 (Ser419) is a Phosphoserine; by MAPK7. Over residues 419 to 432 (SPVDSLSSCSSSYD) the composition is skewed to low complexity. Basic and acidic residues predominate over residues 433–443 (GSDREDHRNEF). Ser445 bears the Phosphoserine mark.

This sequence belongs to the MEF2 family. Forms a complex with class II HDACs in undifferentiating cells. On myogenic differentiation, HDACs are released into the cytoplasm allowing MEF2s to interact with other proteins for activation. Interacts with EP300 in differentiating cells; the interaction acetylates MEF2C leading to increased DNA binding and activation. Interacts with HDAC7 and CARM1. Interacts with HDAC4 and HDAC9; the interaction with HDACs represses transcriptional activity. Interacts with LPIN1. Interacts with MYOCD. Interacts with AKAP13. Interacts with FOXK1; the interaction inhibits MEF2C transactivation activity. Interacts (via N-terminus) with HABP4; this interaction decreases DNA-binding activity of MEF2C in myocardial cells in response to mechanical stress. Interacts with JPH2; interaction specifically takes place with the Junctophilin-2 N-terminal fragment cleavage product of JPH2. Interacts (via MADS box) with SOX18. Interacts with PHF7; the interaction promotes MEF2C binding to its transcription targets. Post-translationally, phosphorylated on Ser-59; which enhances DNA binding activity. Phosphorylated on Ser-396; which is required for Lys-391 sumoylation and inhibits transcriptional activity. In terms of processing, acetylated by p300 on several sites in diffentiating myocytes. Acetylation on Lys-4 increases DNA binding and transactivation. Sumoylated on Lys-391 with SUMO2 but not SUMO1; which represses transcriptional activity. Post-translationally, proteolytically cleaved in cerebellar granule neurons on several sites by caspase 3 and caspase 7 following neurotoxicity. Preferentially cleaves the CDK5-mediated hyperphosphorylated form which leads to neuron apoptosis and transcriptional inactivation. Expressed in the heart. Expressed in cardiac myocytes (at protein level).

The protein localises to the nucleus. Its subcellular location is the cytoplasm. The protein resides in the sarcoplasm. Transcription activator which binds specifically to the MEF2 element present in the regulatory regions of many muscle-specific genes. Controls cardiac morphogenesis and myogenesis, and is also involved in vascular development. Enhances transcriptional activation mediated by SOX18. Plays an essential role in hippocampal-dependent learning and memory by suppressing the number of excitatory synapses and thus regulating basal and evoked synaptic transmission. Crucial for normal neuronal development, distribution, and electrical activity in the neocortex. Necessary for proper development of megakaryocytes and platelets and for bone marrow B-lymphopoiesis. Required for B-cell survival and proliferation in response to BCR stimulation, efficient IgG1 antibody responses to T-cell-dependent antigens and for normal induction of germinal center B-cells. May also be involved in neurogenesis and in the development of cortical architecture. The chain is Myocyte-specific enhancer factor 2C from Rattus norvegicus (Rat).